The chain runs to 529 residues: BTB/POZ domain-containing protein 6 (529 aa).

In terms of domain architecture, BTB spans 127–197 (ADVHFIVGPA…LYSDEIDLEA (71 aa)).

Homodimer and heterodimer. Interacts with cul3 via the BTB domain.

The protein resides in the cytoplasm. Adapter protein for the cul3 E3 ubiquitin-protein ligase complex. Involved in late neuronal development and muscle formation. The polypeptide is BTB/POZ domain-containing protein 6 (btbd6) (Xenopus laevis (African clawed frog)).